Reading from the N-terminus, the 82-residue chain is Photosystem I iron-sulfur center (82 aa).

4Fe-4S ferredoxin-type domains follow at residues 2 to 31 (AHSV…MVPW) and 40 to 69 (IAAA…IRVY). Positions 11, 14, 17, 21, 49, 52, 55, and 59 each coordinate [4Fe-4S] cluster.

In terms of assembly, the cyanobacterial PSI reaction center is composed of one copy each of PsaA,B,C,D,E,F,I,J,K,L,M and X, and forms trimeric complexes. The cofactor is [4Fe-4S] cluster.

It localises to the cellular thylakoid membrane. The catalysed reaction is reduced [plastocyanin] + hnu + oxidized [2Fe-2S]-[ferredoxin] = oxidized [plastocyanin] + reduced [2Fe-2S]-[ferredoxin]. Functionally, apoprotein for the two 4Fe-4S centers FA and FB of photosystem I (PSI); essential for photochemical activity. FB is the terminal electron acceptor of PSI, donating electrons to ferredoxin. The C-terminus interacts with PsaA/B/D and helps assemble the protein into the PSI complex. Required for binding of PsaD and PsaE to PSI. PSI is a plastocyanin/cytochrome c6-ferredoxin oxidoreductase, converting photonic excitation into a charge separation, which transfers an electron from the donor P700 chlorophyll pair to the spectroscopically characterized acceptors A0, A1, FX, FA and FB in turn. In Synechococcus sp. (strain JA-2-3B'a(2-13)) (Cyanobacteria bacterium Yellowstone B-Prime), this protein is Photosystem I iron-sulfur center.